We begin with the raw amino-acid sequence, 155 residues long: Egg-lysin (155 aa).

A signal peptide spans 1–18; that stretch reads MKLLVLCLFAMMATLAVS.

As to quaternary structure, monomer. Homodimer. Molecules associate into dimers and then rapidly dissociate again. Interacts (as a monomer) with the egg vitelline layer protein VERL (via VERL repeats); each VERL chain can bind multiple copies of lysin. As to expression, sperm (at protein level).

It is found in the cytoplasmic vesicle. Its subcellular location is the secretory vesicle. It localises to the acrosome lumen. Functionally, creates a 3 um hole in the egg vitelline layer through which the sperm passes. Does not have enzyme activity. Species-specific interaction between the sperm protein lysin and the egg protein VERL exposes a basic surface on lysin that may dissociate the egg vitelline layer via electrostatic repulsion. Plays a role in ensuring species-specific fertilization. The sequence is that of Egg-lysin from Haliotis corrugata (Pink abalone).